Reading from the N-terminus, the 344-residue chain is Follistatin (344 aa).

Positions 1–29 (MVRARHQPGGLCLLLLLLCQFMEDRSAQA) are cleaved as a signal peptide. The 74-residue stretch at 30–103 (GNCWLRQAKN…TCENVDCGPG (74 aa)) folds into the TB domain. 18 disulfides stabilise this stretch: cysteine 32–cysteine 55, cysteine 42–cysteine 88, cysteine 56–cysteine 91, cysteine 95–cysteine 106, cysteine 100–cysteine 116, cysteine 118–cysteine 150, cysteine 122–cysteine 143, cysteine 132–cysteine 164, cysteine 168–cysteine 179, cysteine 173–cysteine 189, cysteine 192–cysteine 225, cysteine 196–cysteine 218, cysteine 207–cysteine 239, cysteine 245–cysteine 256, cysteine 250–cysteine 267, cysteine 270–cysteine 302, cysteine 274–cysteine 295, and cysteine 284–cysteine 316. One can recognise a Follistatin-like 1 domain in the interval 94–117 (TCENVDCGPGKKCRMNKKNKPRCV). Residues 112–166 (NKPRCVCAPDCSNITWKGPVCGLDGKTYRNECALLKARCKEQPELEVQYQGRCKK) enclose the Kazal-like 1 domain. A glycan (N-linked (GlcNAc...) asparagine) is linked at asparagine 124. Residues 167–190 (TCRDVFCPGSSTCVVDQTNNAYCV) enclose the Follistatin-like 2 domain. One can recognise a Kazal-like 2 domain in the interval 186–241 (NAYCVTCNRICPEPASSEQYLCGNDGVTYSSACHLRKATCLLGRSIGLAYEGKCIK). Residues 244–268 (SCEDIQCTGGKKCLWDFKVGRGRCS) form the Follistatin-like 3 domain. The region spanning 264 to 318 (RGRCSLCDELCPDSKSDEPVCASDNATYASECAMKEAACSSGVLLEVKHSGSCNS) is the Kazal-like 3 domain. The N-linked (GlcNAc...) asparagine glycan is linked to asparagine 288. The segment at 314–344 (GSCNSISEDTEEEEEDEDQDYSFPISSILEW) is disordered. The segment covering 321-333 (EDTEEEEEDEDQD) has biased composition (acidic residues).

In terms of assembly, interacts with GDF11. Interacts with activin A/INHBA. Interacts with MYOSTATIN/MSTN. In terms of tissue distribution, isoform 1 is the predominant isoform in serum but is undetectable in follicular fluid. In the embryo, strong expression is seen in the palatal epithelia, including the medial edge epithelial and midline epithelial seam of the palatal shelves. Less pronounced expression is also seen throughout the palatal shelf and tongue mesenchyme.

It is found in the secreted. It localises to the nucleus. The protein localises to the nucleolus. Multifunctional regulatory protein whose primary function is to antagonize members of the transforming growth factor beta (TGF-beta) superfamily including activin, myostatin, GDF11 or bone morphogenetic proteins (BMPs). Mechanistically, binds to these ligands in the extracellular space, blocking their type II receptor-binding site to inhibit downstream signaling. Plays an essential role in muscle fiber formation and growth both by preventing the repressive effects of myostatin and through SMAD3/AKT/mTOR signaling independently of myostatin. Also promotes neural differentiation by antagonizing the action BMP4. Acts as a specific inhibitor of the biosynthesis and secretion of pituitary follicle stimulating hormone (FSH) by sequestering activin A/INHBA. On the other hand, translocates into the nucleus where it down-regulates rRNA synthesis and ribosome biogenesis to maintain cellular energy homeostasis by binding to rDNA. The sequence is that of Follistatin from Homo sapiens (Human).